A 572-amino-acid chain; its full sequence is Moesin (572 aa).

The FERM domain maps to M1–R294. Disordered regions lie at residues S444 to P508 and L523 to I544. Over residues A454–L475 the composition is skewed to low complexity. The span at E480–D502 shows a compositional bias: acidic residues. Positions A525–I544 are enriched in basic and acidic residues.

The protein localises to the cell membrane. It is found in the cytoplasm. It localises to the cytoskeleton. Its subcellular location is the cell projection. Functionally, probably involved in connections of major cytoskeletal structures to the plasma membrane. The polypeptide is Moesin (Lytechinus variegatus (Green sea urchin)).